We begin with the raw amino-acid sequence, 333 residues long: L-lactate dehydrogenase (333 aa).

NAD(+) contacts are provided by residues 29–57 (GQVG…VADK) and R99. 3 residues coordinate substrate: R106, N138, and R169. N138 is a binding site for NAD(+). The active-site Proton acceptor is H193. Residue T249 participates in substrate binding.

Belongs to the LDH/MDH superfamily. LDH family. In terms of assembly, homotetramer.

Its subcellular location is the cytoplasm. It catalyses the reaction (S)-lactate + NAD(+) = pyruvate + NADH + H(+). The protein operates within fermentation; pyruvate fermentation to lactate; (S)-lactate from pyruvate: step 1/1. The chain is L-lactate dehydrogenase (ldh-1) from Caenorhabditis elegans.